The chain runs to 102 residues: Small ribosomal subunit protein bS18c (102 aa).

This sequence belongs to the bacterial ribosomal protein bS18 family. As to quaternary structure, part of the 30S ribosomal subunit.

The protein localises to the plastid. Its subcellular location is the chloroplast. This chain is Small ribosomal subunit protein bS18c, found in Phaseolus vulgaris (Kidney bean).